The chain runs to 167 residues: ATP synthase subunit b (167 aa).

Residues 8–28 (AEAEFWVGAGLLIFLGIVFFG) form a helical membrane-spanning segment.

The protein belongs to the ATPase B chain family. F-type ATPases have 2 components, F(1) - the catalytic core - and F(0) - the membrane proton channel. F(1) has five subunits: alpha(3), beta(3), gamma(1), delta(1), epsilon(1). F(0) has three main subunits: a(1), b(2) and c(10-14). The alpha and beta chains form an alternating ring which encloses part of the gamma chain. F(1) is attached to F(0) by a central stalk formed by the gamma and epsilon chains, while a peripheral stalk is formed by the delta and b chains.

The protein localises to the cell inner membrane. In terms of biological role, f(1)F(0) ATP synthase produces ATP from ADP in the presence of a proton or sodium gradient. F-type ATPases consist of two structural domains, F(1) containing the extramembraneous catalytic core and F(0) containing the membrane proton channel, linked together by a central stalk and a peripheral stalk. During catalysis, ATP synthesis in the catalytic domain of F(1) is coupled via a rotary mechanism of the central stalk subunits to proton translocation. Component of the F(0) channel, it forms part of the peripheral stalk, linking F(1) to F(0). The polypeptide is ATP synthase subunit b (Phenylobacterium zucineum (strain HLK1)).